We begin with the raw amino-acid sequence, 350 residues long: UDP-3-O-acylglucosamine N-acyltransferase (350 aa).

The active-site Proton acceptor is His-244.

It belongs to the transferase hexapeptide repeat family. LpxD subfamily. Homotrimer.

It catalyses the reaction a UDP-3-O-[(3R)-3-hydroxyacyl]-alpha-D-glucosamine + a (3R)-hydroxyacyl-[ACP] = a UDP-2-N,3-O-bis[(3R)-3-hydroxyacyl]-alpha-D-glucosamine + holo-[ACP] + H(+). The protein operates within bacterial outer membrane biogenesis; LPS lipid A biosynthesis. Catalyzes the N-acylation of UDP-3-O-acylglucosamine using 3-hydroxyacyl-ACP as the acyl donor. Is involved in the biosynthesis of lipid A, a phosphorylated glycolipid that anchors the lipopolysaccharide to the outer membrane of the cell. The polypeptide is UDP-3-O-acylglucosamine N-acyltransferase (Janthinobacterium sp. (strain Marseille) (Minibacterium massiliensis)).